The primary structure comprises 132 residues: CLAVATA3/ESR (CLE)-related protein ESR2 (132 aa).

Positions 1–26 are cleaved as a signal peptide; it reads MASRMGMVAIVSLFVCALVASTSVNA. A disordered region spans residues 68–132; the sequence is NRASKQLDSE…IGPPPFLDRY (65 aa). 2 positions are modified to hydroxyproline: Pro82 and Pro85. An O-linked (Ara...) hydroxyproline glycan is attached at Pro85. Residues 123 to 132 show a composition bias toward pro residues; it reads IGPPPFLDRY.

The protein belongs to the CLV3/ESR signal peptide family. The O-glycosylation (arabinosylation) of the hydroxyproline Pro-85 enhances binding affinity of the ESR2p peptide for its receptor. As to expression, seed endosperm.

Its subcellular location is the secreted. It is found in the extracellular space. Its function is as follows. Extracellular signal peptide that regulates cell fate. This chain is CLAVATA3/ESR (CLE)-related protein ESR2, found in Zea mays (Maize).